Reading from the N-terminus, the 264-residue chain is MSATGEEMTQQSYIQHHLTNLTVGEGFWTWNIDSLLFSVGLGMLFLWLFYRAGKKATTGVPGKFQCFVEIIVEFVDSSVKETFHGRNPVIAPLALTIFVWIFMMNFMDMIPVDWLPSLALLAGVPYLKVVPTTDVNITFSLALGVFVLIIYYSIKVKGVSGFVKELTFQPFNHWAMIPVNLLLETVTLVAKPISLALRLFGNLYAGELIFILIALMYGSNVALSALGVGLQLGWLIFHILVITLQAFIFMMLTIVYLSMAHEDH.

The next 7 membrane-spanning stretches (helical) occupy residues 30-50, 90-110, 111-131, 134-154, 177-197, 208-228, and 235-255; these read WNID…WLFY, IAPL…MDMI, PVDW…KVVP, DVNI…YYSI, IPVN…SLAL, LIFI…ALGV, and LIFH…LTIV.

The protein belongs to the ATPase A chain family. In terms of assembly, F-type ATPases have 2 components, CF(1) - the catalytic core - and CF(0) - the membrane proton channel. CF(1) has five subunits: alpha(3), beta(3), gamma(1), delta(1), epsilon(1). CF(0) has three main subunits: a(1), b(2) and c(9-12). The alpha and beta chains form an alternating ring which encloses part of the gamma chain. CF(1) is attached to CF(0) by a central stalk formed by the gamma and epsilon chains, while a peripheral stalk is formed by the delta and b chains.

It localises to the cell inner membrane. Functionally, key component of the proton channel; it plays a direct role in the translocation of protons across the membrane. In Shewanella frigidimarina (strain NCIMB 400), this protein is ATP synthase subunit a.